Here is a 483-residue protein sequence, read N- to C-terminus: Glutamyl-tRNA(Gln) amidotransferase subunit A (483 aa).

Catalysis depends on charge relay system residues Lys-76 and Ser-151. Ser-175 (acyl-ester intermediate) is an active-site residue.

This sequence belongs to the amidase family. GatA subfamily. In terms of assembly, heterotrimer of A, B and C subunits.

The catalysed reaction is L-glutamyl-tRNA(Gln) + L-glutamine + ATP + H2O = L-glutaminyl-tRNA(Gln) + L-glutamate + ADP + phosphate + H(+). Its function is as follows. Allows the formation of correctly charged Gln-tRNA(Gln) through the transamidation of misacylated Glu-tRNA(Gln) in organisms which lack glutaminyl-tRNA synthetase. The reaction takes place in the presence of glutamine and ATP through an activated gamma-phospho-Glu-tRNA(Gln). The polypeptide is Glutamyl-tRNA(Gln) amidotransferase subunit A (Coxiella burnetii (strain CbuK_Q154) (Coxiella burnetii (strain Q154))).